Consider the following 202-residue polypeptide: ATP-dependent Clp protease proteolytic subunit (202 aa).

Serine 106 functions as the Nucleophile in the catalytic mechanism. Residue histidine 131 is part of the active site.

Belongs to the peptidase S14 family. Fourteen ClpP subunits assemble into 2 heptameric rings which stack back to back to give a disk-like structure with a central cavity, resembling the structure of eukaryotic proteasomes.

It localises to the cytoplasm. It catalyses the reaction Hydrolysis of proteins to small peptides in the presence of ATP and magnesium. alpha-casein is the usual test substrate. In the absence of ATP, only oligopeptides shorter than five residues are hydrolyzed (such as succinyl-Leu-Tyr-|-NHMec, and Leu-Tyr-Leu-|-Tyr-Trp, in which cleavage of the -Tyr-|-Leu- and -Tyr-|-Trp bonds also occurs).. Functionally, cleaves peptides in various proteins in a process that requires ATP hydrolysis. Has a chymotrypsin-like activity. Plays a major role in the degradation of misfolded proteins. This chain is ATP-dependent Clp protease proteolytic subunit, found in Acidovorax sp. (strain JS42).